The chain runs to 334 residues: Aspartate carbamoyltransferase catalytic subunit (334 aa).

Carbamoyl phosphate-binding residues include Arg71 and Thr72. Lys99 is a binding site for L-aspartate. Residues Arg121, His151, and Gln154 each contribute to the carbamoyl phosphate site. The L-aspartate site is built by Arg184 and Arg239. The carbamoyl phosphate site is built by Gly280 and Pro281.

The protein belongs to the aspartate/ornithine carbamoyltransferase superfamily. ATCase family. Heterododecamer (2C3:3R2) of six catalytic PyrB chains organized as two trimers (C3), and six regulatory PyrI chains organized as three dimers (R2).

The enzyme catalyses carbamoyl phosphate + L-aspartate = N-carbamoyl-L-aspartate + phosphate + H(+). It functions in the pathway pyrimidine metabolism; UMP biosynthesis via de novo pathway; (S)-dihydroorotate from bicarbonate: step 2/3. Its function is as follows. Catalyzes the condensation of carbamoyl phosphate and aspartate to form carbamoyl aspartate and inorganic phosphate, the committed step in the de novo pyrimidine nucleotide biosynthesis pathway. The polypeptide is Aspartate carbamoyltransferase catalytic subunit (Pseudomonas putida (Arthrobacter siderocapsulatus)).